The chain runs to 567 residues: Glucose-6-phosphate isomerase, cytosolic B (567 aa).

Residues 156–157 (GS), 212–217 (SKTFTT), Gln-356, Glu-360, His-391, and Lys-516 each bind D-glucose 6-phosphate. Residue Glu-360 is the Proton donor of the active site. Active-site residues include His-391 and Lys-516.

It belongs to the GPI family. As to quaternary structure, homodimer.

It is found in the cytoplasm. The enzyme catalyses alpha-D-glucose 6-phosphate = beta-D-fructose 6-phosphate. Its pathway is carbohydrate degradation; glycolysis; D-glyceraldehyde 3-phosphate and glycerone phosphate from D-glucose: step 2/4. In terms of biological role, catalyzes the conversion of glucose-6-phosphate to fructose-6-phosphate, the second step in glycolysis, and the reverse reaction during gluconeogenesis. The polypeptide is Glucose-6-phosphate isomerase, cytosolic B (Oryza sativa subsp. japonica (Rice)).